The primary structure comprises 525 residues: Sucrose transport protein (525 aa).

Residues 1-37 (MAGRNIKNGENNKIAGSSLHLEKNPTTPPEAEATLKK) are Cytoplasmic-facing. The next 12 helical transmembrane spans lie at 38-58 (LGLV…QLSL), 72-92 (WAAY…PLVG), 107-127 (PFIA…GFAA), 145-165 (AIAV…TLQG), 184-204 (YANA…YAAG), 230-250 (SCFF…LSVV), 295-315 (MLIL…FLLF), 338-358 (GVHA…VMSL), 373-393 (LWGI…LVTK), 422-442 (LAIF…PFAL), 455-475 (GLSL…VSVT), and 488-508 (LPAF…SFTL). Topologically, residues 509–525 (LPSPPPEAKIGGSMGGH) are cytoplasmic.

This sequence belongs to the glycoside-pentoside-hexuronide (GPH) cation symporter transporter (TC 2.A.2.4) family.

It is found in the membrane. It functions in the pathway glycan biosynthesis; sucrose metabolism. Functionally, responsible for the transport of sucrose into the cell, with the concomitant uptake of protons (symport system). Can also transport maltose at a lesser rate. The sequence is that of Sucrose transport protein from Spinacia oleracea (Spinach).